Here is a 334-residue protein sequence, read N- to C-terminus: Probable fructose-bisphosphate aldolase class 1 (334 aa).

The protein belongs to the class I fructose-bisphosphate aldolase family.

The catalysed reaction is beta-D-fructose 1,6-bisphosphate = D-glyceraldehyde 3-phosphate + dihydroxyacetone phosphate. It participates in carbohydrate degradation; glycolysis; D-glyceraldehyde 3-phosphate and glycerone phosphate from D-glucose: step 4/4. The sequence is that of Probable fructose-bisphosphate aldolase class 1 from Xylella fastidiosa (strain 9a5c).